The chain runs to 98 residues: RING finger protein Z (98 aa).

Positions 1 to 10 (MGNTKTKDRQ) are enriched in basic and acidic residues. Residues 1-26 (MGNTKTKDRQYQSNSSQPTNTSAPVL) form a disordered region. The N-myristoyl glycine; by host moiety is linked to residue Gly-2. A compositionally biased stretch (polar residues) spans 11–23 (YQSNSSQPTNTSA). Residues 41 to 77 (CRCCWFADTNLVNCSNHYLCLKCLNTMLRRSNLCDIC) form an RING-type; atypical zinc finger. A PTAP/PSAP motif motif is present at residues 91-94 (PSAP).

Belongs to the arenaviridae Z protein family. Interacts with protein NP; this interaction probably directs the encapsidated genome to budding sites. Interacts (via RING domain) with polymerase L; this interaction inhibits viral transcription and replication, Z partially blocks the product exit tunnel for the releasing nascent RNA product. Interacts with the glycoprotein complex; this interaction plays a role in virion budding. Interacts with host eIF4E; this interaction results in eIF4E reduced affinity for its substrate, the 5'-m7 G cap structure. Interacts (via late-budding domain) with host TSG101; this interaction is essential for budding and release of viral particles. Interacts with host RPLP0; this interaction may serve to load ribosome-like particles inside the virion. Interacts with host PML; this interaction induces PML bodies redistribution in the cytoplasm upon viral infection. Myristoylation is required for the role of RING finger protein Z in assembly and budding.

The protein resides in the virion. It localises to the host cytoplasm. Its subcellular location is the host perinuclear region. It is found in the host cell membrane. Functionally, plays a crucial role in virion assembly and budding. Expressed late in the virus life cycle, it acts as an inhibitor of viral transcription and RNA synthesis by interacting with the viral polymerase L. Presumably recruits the NP encapsidated genome to cellular membranes at budding sites via direct interaction with NP. Plays critical roles in the final steps of viral release by interacting with host TSG101, a member of the vacuolar protein-sorting pathway and using other cellular host proteins involved in vesicle formation pathway. The budding of the virus progeny occurs after association of protein Z with the viral glycoprotein complex SSP-GP1-GP2 at the cell periphery, step that requires myristoylation of protein Z. Also selectively represses protein production by associating with host eIF4E. In cell-based minigenome assay, has an inhibitory effect on the ribonucleoprotein machinery (vRNP), which is responsible for the replication and transcription of the viral genome. This chain is RING finger protein Z, found in Chapare mammarenavirus (isolate Human/Bolivia/810419/2003).